The sequence spans 59 residues: Cortexin domain containing 2 (59 aa).

The chain crosses the membrane as a helical span at residues 20-40; the sequence is FAIAFVVLVFVFLIVMVFRCV.

It localises to the membrane. The protein is Cortexin domain containing 2 of Mus musculus (Mouse).